The following is a 315-amino-acid chain: Small ribosomal subunit biogenesis GTPase RsgA (315 aa).

One can recognise a CP-type G domain in the interval 79-243; that stretch reads LSKESHILGA…LIDTPGIKGF (165 aa). Residues 128–131 and 182–190 each bind GTP; these read NKID and GHSGVGKSS. Zn(2+)-binding residues include cysteine 267, cysteine 272, histidine 274, and cysteine 280.

It belongs to the TRAFAC class YlqF/YawG GTPase family. RsgA subfamily. Monomer. Associates with 30S ribosomal subunit, binds 16S rRNA. Zn(2+) is required as a cofactor.

The protein localises to the cytoplasm. In terms of biological role, one of several proteins that assist in the late maturation steps of the functional core of the 30S ribosomal subunit. Helps release RbfA from mature subunits. May play a role in the assembly of ribosomal proteins into the subunit. Circularly permuted GTPase that catalyzes slow GTP hydrolysis, GTPase activity is stimulated by the 30S ribosomal subunit. In Porphyromonas gingivalis (strain ATCC BAA-308 / W83), this protein is Small ribosomal subunit biogenesis GTPase RsgA.